Reading from the N-terminus, the 508-residue chain is Cyclic AMP-responsive element-binding protein 5 (508 aa).

Residues 16 to 40 (FVCSAPGCSQRFPTEDHLMIHRHKH) form a C2H2-type zinc finger. Residue Lys50 forms a Glycyl lysine isopeptide (Lys-Gly) (interchain with G-Cter in SUMO2) linkage. Thr59 and Thr61 each carry phosphothreonine. Ser137 carries the post-translational modification Phosphoserine. Residues 265–391 (RQDQTPHHHM…LERNRAAATR (127 aa)) form a disordered region. 2 stretches are compositionally biased toward basic residues: residues 271-280 (HHHMHSHPHQ) and 289-326 (PYPH…HPAH). Polar residues predominate over residues 337 to 346 (TGNQAQVSPA). The span at 347–357 (TQQMQPTQTIQ) shows a compositional bias: low complexity. Over residues 369–386 (VVDEDPDERRRKFLERNR) the composition is skewed to basic and acidic residues. In terms of domain architecture, bZIP spans 375–438 (DERRRKFLER…AQLKQLLLTH (64 aa)). Positions 377–397 (RRRKFLERNRAAATRCRQKRK) are basic motif. The tract at residues 403–431 (LEKKAEELTQTNMQLQNEVSMLKNEVAQL) is leucine-zipper. The segment at 449 to 468 (ESQGYLSPESSPPASPVPAC) is disordered.

It belongs to the bZIP family. As to quaternary structure, binds DNA as a homodimer or as a heterodimer with JUN or ATF2/CREBP1.

It is found in the nucleus. Its function is as follows. Binds to the cAMP response element and activates transcription. The sequence is that of Cyclic AMP-responsive element-binding protein 5 (CREB5) from Homo sapiens (Human).